Here is a 124-residue protein sequence, read N- to C-terminus: Cytoinsectotoxin-4 (124 aa).

An N-terminal signal peptide occupies residues 1-19; sequence MKCFILAAALVLAFACIAA. Residues 20 to 62 constitute a propeptide that is removed on maturation; sequence SEPAETENEDLDDLSDLEDEEWLDELEEAAEYLESLREFEESR. Phenylalanine 123 bears the Phenylalanine amide mark.

The protein belongs to the cationic peptide 06 (cytoinsectotoxin) family. Expressed by the venom gland.

It localises to the secreted. In terms of biological role, insecticidal and antimicrobial peptide. Has insecticidal activity against larvae of flesh fly S.carnaria. Has antibacterial activity against Gram-positive bacterium B.subtilis B-501 (MIC=2.5 uM) and Gram-negative bacterium E.coli DH5alpha (MIC=10 uM). This chain is Cytoinsectotoxin-4, found in Lachesana tarabaevi (Spider).